Consider the following 223-residue polypeptide: Adenine phosphoribosyltransferase (223 aa).

Belongs to the purine/pyrimidine phosphoribosyltransferase family. Homodimer.

The protein localises to the cytoplasm. The catalysed reaction is AMP + diphosphate = 5-phospho-alpha-D-ribose 1-diphosphate + adenine. It participates in purine metabolism; AMP biosynthesis via salvage pathway; AMP from adenine: step 1/1. In terms of biological role, catalyzes a salvage reaction resulting in the formation of AMP, that is energically less costly than de novo synthesis. This Mycobacterium bovis (strain ATCC BAA-935 / AF2122/97) protein is Adenine phosphoribosyltransferase.